The following is a 238-amino-acid chain: Ribonuclease PH (238 aa).

Residues Arg86 and 124–126 (GTR) contribute to the phosphate site.

It belongs to the RNase PH family. As to quaternary structure, homohexameric ring arranged as a trimer of dimers.

The catalysed reaction is tRNA(n+1) + phosphate = tRNA(n) + a ribonucleoside 5'-diphosphate. Its function is as follows. Phosphorolytic 3'-5' exoribonuclease that plays an important role in tRNA 3'-end maturation. Removes nucleotide residues following the 3'-CCA terminus of tRNAs; can also add nucleotides to the ends of RNA molecules by using nucleoside diphosphates as substrates, but this may not be physiologically important. Probably plays a role in initiation of 16S rRNA degradation (leading to ribosome degradation) during starvation. This chain is Ribonuclease PH, found in Vibrio cholerae serotype O1 (strain ATCC 39315 / El Tor Inaba N16961).